A 1093-amino-acid polypeptide reads, in one-letter code: MSSFFKSFAGNPREAAAMAMVQSSSYRVLSGKSCSNLRRNTPLDSFLAKGRSSVKAFSFLYVSRFSTEPNNEFGHSSKRRSRGPVMAAKKASEGEKQEDGKYKQTVDLPKTGFGMRANSLTREPELQKLWEENQVFKRVSDNNNGGSFILHDGPPYANGDLHMGHALNKILKDIINRYKLLQNYKVQYVPGWDCHGLPIELKVLQSLDQEVRKELTPLKLRAKAAKFAKATVKTQMESFKRFGVWADWNNPYLTLDPEYEAAQIEVFGQMALKGYIYRGRKPVHWSPSSRTALAEAELEYPEGHISKSIYAIFKLVGGAKTSLLDEFIPNIYLAVWTTTPWTMPANAAVAVNAKLQYSVVEVQSFSEDESTVTSNKKKIPGKVLKNQQKLFVIVATDLVPALEAKWGVKLSISKTFLGSDLENCRYTHPIDNRDCPVVIGGDYITTESGTGLVHTAPGHGQEDYATGLKYGLPLVSPVDDEGKFTEEAGQFRGLSVLGEGNTAVVSYLDENMSLVMEESYAHKYPYDWRTKKPTIFRATEQWFASVEGFRTATMDAINNVKWVPHQAVNRISAMTSSRSDWCISRQRTWGVPIPAFYHVKTKEPLMNEETINHVKSIISQKGSDAWWYMSVEDLLPEKYRDKAADYEKGTDTMDVWFDSGSSWAGVLGKREGLSFPADVYLEGTDQHRGWFQSSLLTSIATQGKAPYSAVITHGFVLDEKGMKMSKSLGNVVDPRLVIEGGKNSKDAPAYGADVMRLWVSSVDYTGDVLIGPQILRQMSDIYRKLRGTLRYLLGNLHDWRVDNAVPYQDLPIIDQHALFQLENVVKNIQECYENYQFFKIFQIIQRFTIVDLSNFYFDIAKDRLYTGGTSSFTRRSCQTVLSTHLLSILRVIAPIVPHLAEDVWQNLPFEYRNEDGSAAEFVFELKWPTLNEQWLSFPAEDVLFWQRLLELRTEVNKVLELARNEKMIGSSLEAKVYLHTADAGMAAKLLEMSEAKNEADTLQRIFITSQVEVLSSMEKEMISSVQHTGEYVEGENKVWIGVSRAEGSKCERCWNYSGQVGSFSDHPTLCGRCFSVIVANPPEPAVAAVNSLA.

Residues 69-103 (PNNEFGHSSKRRSRGPVMAAKKASEGEKQEDGKYK) are disordered. Basic and acidic residues predominate over residues 90–103 (KASEGEKQEDGKYK). Residues 155-165 (PYANGDLHMGH) carry the 'HIGH' region motif. Residue Glu-682 coordinates L-isoleucyl-5'-AMP. A 'KMSKS' region motif is present at residues 723-727 (KMSKS). Lys-726 provides a ligand contact to ATP. Zn(2+) is bound by residues Cys-1050, Cys-1053, Cys-1070, and Cys-1073.

Belongs to the class-I aminoacyl-tRNA synthetase family.

It localises to the plastid. The protein resides in the chloroplast. The protein localises to the mitochondrion. It carries out the reaction tRNA(Ile) + L-isoleucine + ATP = L-isoleucyl-tRNA(Ile) + AMP + diphosphate. This is Isoleucine--tRNA ligase, chloroplastic/mitochondrial from Arabidopsis thaliana (Mouse-ear cress).